Here is a 243-residue protein sequence, read N- to C-terminus: MQTPKYRRVVLKLSGEALAGAKGFGLDPQVLTALARQIKAVHDMGVQVAIVVGAGNFWRGRLGEQMGMDRASADYMGLLATVMNALALQDAIEKLQVDTRVMTAVEMRQVAEPFIRRRAIRHLEKGRVVIFAAGTGNPYFTTDTAAALRAAEIEAEAILMGKQGVQGVYDSDPRINRHAVKYDEVTYQEVLAKNLQVMDATATALCMDNRIPIVVFDMMGPDHIVKVVLGEDVGQTFVRGNNQ.

12 to 15 is a binding site for ATP; the sequence is KLSG. The segment at 20–25 is involved in allosteric activation by GTP; that stretch reads GAKGFG. Gly-55 and Arg-59 together coordinate ATP. Residues Asp-74 and 135-142 contribute to the UMP site; that span reads TGNPYFTT. ATP-binding residues include Gln-163, Tyr-169, and Asp-172.

This sequence belongs to the UMP kinase family. In terms of assembly, homohexamer.

It is found in the cytoplasm. It carries out the reaction UMP + ATP = UDP + ADP. It participates in pyrimidine metabolism; CTP biosynthesis via de novo pathway; UDP from UMP (UMPK route): step 1/1. Allosterically activated by GTP. Inhibited by UTP. In terms of biological role, catalyzes the reversible phosphorylation of UMP to UDP. The protein is Uridylate kinase of Symbiobacterium thermophilum (strain DSM 24528 / JCM 14929 / IAM 14863 / T).